Here is a 337-residue protein sequence, read N- to C-terminus: GTP 3',8-cyclase (337 aa).

Residues 18 to 242 (NFGRRFHYLR…DKADILDGPA (225 aa)) enclose the Radical SAM core domain. A GTP-binding site is contributed by R27. [4Fe-4S] cluster-binding residues include C34 and C38. An S-adenosyl-L-methionine-binding site is contributed by Y40. Residue C41 participates in [4Fe-4S] cluster binding. R76 contributes to the GTP binding site. An S-adenosyl-L-methionine-binding site is contributed by G80. T107 contacts GTP. S-adenosyl-L-methionine is bound at residue S131. Position 168 (K168) interacts with GTP. M202 provides a ligand contact to S-adenosyl-L-methionine. C265 and C268 together coordinate [4Fe-4S] cluster. 270 to 272 (RLR) lines the GTP pocket. [4Fe-4S] cluster is bound at residue C282.

It belongs to the radical SAM superfamily. MoaA family. In terms of assembly, monomer and homodimer. [4Fe-4S] cluster serves as cofactor.

The catalysed reaction is GTP + AH2 + S-adenosyl-L-methionine = (8S)-3',8-cyclo-7,8-dihydroguanosine 5'-triphosphate + 5'-deoxyadenosine + L-methionine + A + H(+). It functions in the pathway cofactor biosynthesis; molybdopterin biosynthesis. Its function is as follows. Catalyzes the cyclization of GTP to (8S)-3',8-cyclo-7,8-dihydroguanosine 5'-triphosphate. This is GTP 3',8-cyclase from Shewanella denitrificans (strain OS217 / ATCC BAA-1090 / DSM 15013).